The chain runs to 273 residues: 5-deoxy-glucuronate isomerase (273 aa).

This sequence belongs to the isomerase IolB family.

It catalyses the reaction 5-deoxy-D-glucuronate = 5-dehydro-2-deoxy-D-gluconate. Its pathway is polyol metabolism; myo-inositol degradation into acetyl-CoA; acetyl-CoA from myo-inositol: step 4/7. Its function is as follows. Involved in the isomerization of 5-deoxy-glucuronate (5DG) to 5-dehydro-2-deoxy-D-gluconate (DKG or 2-deoxy-5-keto-D-gluconate). This chain is 5-deoxy-glucuronate isomerase, found in Listeria monocytogenes serovar 1/2a (strain ATCC BAA-679 / EGD-e).